Consider the following 234-residue polypeptide: Uridylate kinase (234 aa).

Residue 9-12 participates in ATP binding; it reads KLSG. Gly51 lines the UMP pocket. Positions 52 and 56 each coordinate ATP. UMP is bound by residues Asp71 and 132–139; that span reads CGNPFFTT. Thr159, Tyr165, and Asp168 together coordinate ATP.

This sequence belongs to the UMP kinase family. As to quaternary structure, homohexamer.

It is found in the cytoplasm. The enzyme catalyses UMP + ATP = UDP + ADP. The protein operates within pyrimidine metabolism; CTP biosynthesis via de novo pathway; UDP from UMP (UMPK route): step 1/1. With respect to regulation, inhibited by UTP. Its function is as follows. Catalyzes the reversible phosphorylation of UMP to UDP. This chain is Uridylate kinase, found in Prochlorococcus marinus (strain MIT 9515).